The following is a 379-amino-acid chain: 4-hydroxy-3-methylbut-2-enyl diphosphate reductase (379 aa).

[4Fe-4S] cluster is bound at residue Cys-39. His-69 provides a ligand contact to (2E)-4-hydroxy-3-methylbut-2-enyl diphosphate. Dimethylallyl diphosphate is bound at residue His-69. His-69 contributes to the isopentenyl diphosphate binding site. Position 130 (Cys-130) interacts with [4Fe-4S] cluster. A (2E)-4-hydroxy-3-methylbut-2-enyl diphosphate-binding site is contributed by His-158. His-158 provides a ligand contact to dimethylallyl diphosphate. His-158 is a binding site for isopentenyl diphosphate. The Proton donor role is filled by Glu-160. Residue Thr-223 participates in (2E)-4-hydroxy-3-methylbut-2-enyl diphosphate binding. [4Fe-4S] cluster is bound at residue Cys-261. Ser-290, Ser-291, Asn-292, and Ser-352 together coordinate (2E)-4-hydroxy-3-methylbut-2-enyl diphosphate. Dimethylallyl diphosphate is bound by residues Ser-290, Ser-291, Asn-292, and Ser-352. Positions 290, 291, 292, and 352 each coordinate isopentenyl diphosphate.

Belongs to the IspH family. The cofactor is [4Fe-4S] cluster.

The catalysed reaction is isopentenyl diphosphate + 2 oxidized [2Fe-2S]-[ferredoxin] + H2O = (2E)-4-hydroxy-3-methylbut-2-enyl diphosphate + 2 reduced [2Fe-2S]-[ferredoxin] + 2 H(+). The enzyme catalyses dimethylallyl diphosphate + 2 oxidized [2Fe-2S]-[ferredoxin] + H2O = (2E)-4-hydroxy-3-methylbut-2-enyl diphosphate + 2 reduced [2Fe-2S]-[ferredoxin] + 2 H(+). The protein operates within isoprenoid biosynthesis; dimethylallyl diphosphate biosynthesis; dimethylallyl diphosphate from (2E)-4-hydroxy-3-methylbutenyl diphosphate: step 1/1. It participates in isoprenoid biosynthesis; isopentenyl diphosphate biosynthesis via DXP pathway; isopentenyl diphosphate from 1-deoxy-D-xylulose 5-phosphate: step 6/6. Catalyzes the conversion of 1-hydroxy-2-methyl-2-(E)-butenyl 4-diphosphate (HMBPP) into a mixture of isopentenyl diphosphate (IPP) and dimethylallyl diphosphate (DMAPP). Acts in the terminal step of the DOXP/MEP pathway for isoprenoid precursor biosynthesis. The chain is 4-hydroxy-3-methylbut-2-enyl diphosphate reductase from Synechocystis sp. (strain ATCC 27184 / PCC 6803 / Kazusa).